The chain runs to 829 residues: G-type lectin S-receptor-like serine/threonine-protein kinase At1g34300 (829 aa).

Residues 1–25 (MAVKTPFLKLLPLLLLLLHFPFSFS) form the signal peptide. Bulb-type lectin domains lie at 26–140 (TIPL…SSFD) and 143–260 (TDTI…PVNA). Topologically, residues 26–421 (TIPLGSVIYA…KGDDNNSKVH (396 aa)) are extracellular. N-linked (GlcNAc...) asparagine glycosylation is found at N46, N98, N130, N151, N172, N178, N189, and N195. The 38-residue stretch at 264-301 (AVDQCLVYGYCGNFGICSYNDTNPICSCPSRNFDFVDV) folds into the EGF-like domain. 5 disulfides stabilise this stretch: C268-C280, C274-C289, C317-C399, C350-C373, and C354-C360. N-linked (GlcNAc...) asparagine glycans are attached at residues N283 and N320. Positions 317–399 (CSGNTTMLDL…VPSTSYVKVC (83 aa)) constitute an Apple domain. N-linked (GlcNAc...) asparagine glycosylation occurs at N416. The chain crosses the membrane as a helical span at residues 422 to 442 (LWIVAVAVIAGLLGLVAVEIG). Residues 443–829 (LWWCCCRKNP…RISEGSMLGS (387 aa)) lie on the Cytoplasmic side of the membrane. Residues 484-759 (KSFKEKLGAG…GKVVQMLEGI (276 aa)) enclose the Protein kinase domain. Residues 490–498 (LGAGGFGTV) and K512 contribute to the ATP site. Phosphoserine is present on S532. The interval 572–589 (DSAKFLTWEYRFNIALGT) is caM-binding. Catalysis depends on D608, which acts as the Proton acceptor. Phosphoserine occurs at positions 625 and 799.

It belongs to the protein kinase superfamily. Ser/Thr protein kinase family.

The protein localises to the cell membrane. The enzyme catalyses L-seryl-[protein] + ATP = O-phospho-L-seryl-[protein] + ADP + H(+). It catalyses the reaction L-threonyl-[protein] + ATP = O-phospho-L-threonyl-[protein] + ADP + H(+). The sequence is that of G-type lectin S-receptor-like serine/threonine-protein kinase At1g34300 from Arabidopsis thaliana (Mouse-ear cress).